The sequence spans 162 residues: Cyclic pyranopterin monophosphate synthase (162 aa).

Substrate-binding positions include 75–77 (LCH) and 113–114 (ME). The active site involves Asp128.

The protein belongs to the MoaC family. As to quaternary structure, homohexamer; trimer of dimers.

It catalyses the reaction (8S)-3',8-cyclo-7,8-dihydroguanosine 5'-triphosphate = cyclic pyranopterin phosphate + diphosphate. Its pathway is cofactor biosynthesis; molybdopterin biosynthesis. Functionally, catalyzes the conversion of (8S)-3',8-cyclo-7,8-dihydroguanosine 5'-triphosphate to cyclic pyranopterin monophosphate (cPMP). This Burkholderia lata (strain ATCC 17760 / DSM 23089 / LMG 22485 / NCIMB 9086 / R18194 / 383) protein is Cyclic pyranopterin monophosphate synthase.